A 394-amino-acid chain; its full sequence is Elongation factor Tu 2 (394 aa).

A tr-type G domain is found at 10-204; the sequence is KPHVNVGTIG…YLDSYIPEPE (195 aa). The interval 19–26 is G1; the sequence is GHVDHGKT. Residue 19–26 participates in GTP binding; sequence GHVDHGKT. Mg(2+) is bound at residue Thr-26. The G2 stretch occupies residues 60–64; that stretch reads GITIN. The segment at 81-84 is G3; sequence DCPG. Residues 81-85 and 136-139 each bind GTP; these read DCPGH and NKCD. Positions 136–139 are G4; it reads NKCD. The tract at residues 174 to 176 is G5; sequence SAL.

This sequence belongs to the TRAFAC class translation factor GTPase superfamily. Classic translation factor GTPase family. EF-Tu/EF-1A subfamily. As to quaternary structure, monomer.

It is found in the cytoplasm. The catalysed reaction is GTP + H2O = GDP + phosphate + H(+). In terms of biological role, GTP hydrolase that promotes the GTP-dependent binding of aminoacyl-tRNA to the A-site of ribosomes during protein biosynthesis. The polypeptide is Elongation factor Tu 2 (Yersinia pseudotuberculosis serotype O:1b (strain IP 31758)).